Reading from the N-terminus, the 665-residue chain is Beta-galactosidase LacZ (665 aa).

R110 lines the substrate pocket. C114 is a binding site for Zn(2+). N148 serves as a coordination point for substrate. E149 serves as the catalytic Proton donor. Zn(2+) contacts are provided by C157, C159, and C162. E303 acts as the Nucleophile in catalysis. Residues W311 and 351–354 (EKFH) each bind substrate.

It belongs to the glycosyl hydrolase 42 family.

The catalysed reaction is Hydrolysis of terminal non-reducing beta-D-galactose residues in beta-D-galactosides.. This chain is Beta-galactosidase LacZ, found in Heyndrickxia coagulans (Weizmannia coagulans).